We begin with the raw amino-acid sequence, 229 residues long: Small ribosomal subunit protein uS3 (229 aa).

The KH type-2 domain maps to 39 to 107 (VRKFLEKKLK…PAQINIAEIR (69 aa)).

It belongs to the universal ribosomal protein uS3 family. As to quaternary structure, part of the 30S ribosomal subunit. Forms a tight complex with proteins S10 and S14.

Binds the lower part of the 30S subunit head. Binds mRNA in the 70S ribosome, positioning it for translation. The protein is Small ribosomal subunit protein uS3 of Shewanella loihica (strain ATCC BAA-1088 / PV-4).